Consider the following 473-residue polypeptide: SHC-transforming protein 1 (473 aa).

A disordered region spans residues 1 to 26 (MNKLSGGGGRRTRVEGGQLGGEEWTR). Ser-29 carries the phosphoserine modification. At Lys-44 the chain carries N6-acetyllysine. The PID domain maps to 46–229 (MGPGVSYLVR…AGFDGSAWDE (184 aa)). Residues 216–314 (HDRMAGFDGS…PSSGRELFDD (99 aa)) form a disordered region. Positions 230 to 377 (EEEEPPDHQY…AMAEQLRGEP (148 aa)) are CH1. Phosphotyrosine is present on residues Tyr-239, Tyr-240, and Tyr-317. The segment at 328–348 (QAGAGAGPPNPTINGSAPRDL) is disordered. The residue at position 343 (Ser-343) is a Phosphoserine. Positions 378–469 (WFHGKLSRRE…GSELCLQQPV (92 aa)) constitute an SH2 domain.

As to quaternary structure, interacts with CPNE3; this interaction may mediate the binding of CPNE3 with ERBB2. Interacts with the Trk receptors NTRK1, NTRK2 and NTRK3; in a phosphotyrosine-dependent manner. Interacts with the NPXY motif of tyrosine-phosphorylated IGF1R and INSR in vitro via the PID domain. Once activated, binds to GRB2. Interacts with tyrosine-phosphorylated CD3T and DDR2. Interacts with the N-terminal region of APS. Interacts with phosphorylated LRP1 and IRS4. Interacts with INPP5D/SHIP1 and INPPL1/SHIP2. Interacts with ALK, GAB2, GRB7 and KIT. Interacts with PTPN6/SHP (tyrosine phosphorylated). Identified in a complex containing FGFR4, NCAM1, CDH2, PLCG1, FRS2, SRC, SHC1, GAP43 and CTTN. Interacts with FLT4 (tyrosine-phosphorylated). Interacts with EPHB1 and GRB2; activates the MAPK/ERK cascade to regulate cell migration. Interacts with PDGFRB (tyrosine-phosphorylated). Interacts with ERBB4. Interacts with TEK/TIE2 (tyrosine-phosphorylated). Interacts with PTK2/FAK1. Interacts with CEACAM1; this interaction is CEACAM1-phosphorylation-dependent and mediates interaction with EGFR or INSR resulting in decrease coupling of SHC1 to the MAPK3/ERK1-MAPK1/ERK2 pathway. Interacts (via PID domain) with PEAK1 (when phosphorylated). Found in a complex with PPP1CA, PPP1CC, SHC1 and PEAK1. Phosphorylated by activated epidermal growth factor receptor. Phosphorylated in response to KIT signaling. Tyrosine phosphorylated in response to FLT3 and FLT4 signaling and by ligand-activated ALK. Tyrosine phosphorylated by ligand-activated PDGFRB. Tyrosine phosphorylated by TEK/TIE2. May be tyrosine phosphorylated by activated PTK2/FAK1. Tyrosine phosphorylated by activated PTK2B/PYK2. Dephosphorylation by PTPN2 may regulate interaction with GRB2.

It localises to the cytoplasm. The protein resides in the cell junction. The protein localises to the focal adhesion. Signaling adapter that couples activated growth factor receptors to signaling pathways. Participates in a signaling cascade initiated by activated KIT and KITLG/SCF. Participates in signaling downstream of the angiopoietin receptor TEK/TIE2, and plays a role in the regulation of endothelial cell migration and sprouting angiogenesis. The chain is SHC-transforming protein 1 (SHC1) from Bos taurus (Bovine).